We begin with the raw amino-acid sequence, 427 residues long: 3-phosphoshikimate 1-carboxyvinyltransferase (427 aa).

3 residues coordinate 3-phosphoshikimate: K27, S28, and R32. K27 contacts phosphoenolpyruvate. The phosphoenolpyruvate site is built by G95 and R123. Positions 166, 167, 168, 192, 305, and 332 each coordinate 3-phosphoshikimate. Q168 is a phosphoenolpyruvate binding site. Residue D305 is the Proton acceptor of the active site. Positions 336 and 377 each coordinate phosphoenolpyruvate.

Belongs to the EPSP synthase family. Monomer.

It is found in the cytoplasm. It carries out the reaction 3-phosphoshikimate + phosphoenolpyruvate = 5-O-(1-carboxyvinyl)-3-phosphoshikimate + phosphate. Its pathway is metabolic intermediate biosynthesis; chorismate biosynthesis. In terms of biological role, catalyzes the transfer of the enolpyruvyl moiety of phosphoenolpyruvate (PEP) to the 5-hydroxyl of shikimate-3-phosphate (S3P) to produce enolpyruvyl shikimate-3-phosphate and inorganic phosphate. In Aeropyrum pernix (strain ATCC 700893 / DSM 11879 / JCM 9820 / NBRC 100138 / K1), this protein is 3-phosphoshikimate 1-carboxyvinyltransferase.